We begin with the raw amino-acid sequence, 90 residues long: Acylphosphatase (90 aa).

Residues Asn-3 to Tyr-90 enclose the Acylphosphatase-like domain. Catalysis depends on residues Arg-18 and Asn-36.

Belongs to the acylphosphatase family.

The catalysed reaction is an acyl phosphate + H2O = a carboxylate + phosphate + H(+). The polypeptide is Acylphosphatase (acyP) (Ligilactobacillus salivarius (strain UCC118) (Lactobacillus salivarius)).